The sequence spans 261 residues: Chanoclavine-I dehydrogenase easD (261 aa).

Residues Ile-18, Lys-48, Asp-66, Arg-132, Tyr-166, Lys-170, and Thr-201 each contribute to the NADP(+) site. Tyr-166 functions as the Proton donor in the catalytic mechanism. The active-site Lowers pKa of active site Tyr is Lys-170.

Belongs to the short-chain dehydrogenases/reductases (SDR) family.

The enzyme catalyses chanoclavine-I + NAD(+) = chanoclavine-I aldehyde + NADH + H(+). Its pathway is alkaloid biosynthesis; ergot alkaloid biosynthesis. In terms of biological role, chanoclavine-I dehydrogenase; part of the gene cluster that mediates the biosynthesis of fumiclavanine C, a fungal ergot alkaloid. DmaW catalyzes the first step of ergot alkaloid biosynthesis by condensing dimethylallyl diphosphate (DMAP) and tryptophan to form 4-dimethylallyl-L-tryptophan. The second step is catalyzed by the methyltransferase easF that methylates 4-dimethylallyl-L-tryptophan in the presence of S-adenosyl-L-methionine, resulting in the formation of 4-dimethylallyl-L-abrine. The catalase easC and the FAD-dependent oxidoreductase easE then transform 4-dimethylallyl-L-abrine to chanoclavine-I which is further oxidized by EasD in the presence of NAD(+), resulting in the formation of chanoclavine-I aldehyde. EasA reduces chanoclavine-I aldehyde to dihydrochanoclavine-I aldehyde that spontaneously dehydrates to form 6,8-dimethyl-6,7-didehydroergoline. EasG then catalyzes the reduction of 6,8-dimethyl-6,7-didehydroergoline to form festuclavine. Hydrolysis of festuclavine by easM then leads to the formation of fumigaclavine B which is in turn acetylated by easN to fumigaclavine A. Finally, easL catalyzes the conversion of fumigaclavine A into fumigaclavine C by attaching a dimethylallyl moiety to C-2 of the indole nucleus. The sequence is that of Chanoclavine-I dehydrogenase easD from Aspergillus fumigatus (strain ATCC MYA-4609 / CBS 101355 / FGSC A1100 / Af293) (Neosartorya fumigata).